A 380-amino-acid polypeptide reads, in one-letter code: 3-dehydroquinate synthase (380 aa).

Belongs to the archaeal-type DHQ synthase family.

The enzyme catalyses 2-amino-2,3,7-trideoxy-D-lyxo-hept-6-ulosonate + NAD(+) + H2O = 3-dehydroquinate + NH4(+) + NADH + H(+). In terms of biological role, catalyzes the oxidative deamination and cyclization of 2-amino-3,7-dideoxy-D-threo-hept-6-ulosonic acid (ADH) to yield 3-dehydroquinate (DHQ), which is fed into the canonical shikimic pathway of aromatic amino acid biosynthesis. This chain is 3-dehydroquinate synthase, found in Methanosarcina barkeri (strain Fusaro / DSM 804).